The following is a 119-amino-acid chain: Developmental pluripotency-associated protein 5B/5C (119 aa).

The KH; atypical domain occupies 24 to 86 (PEVFQVQSLV…SIKVRAKWLL (63 aa)).

It belongs to the KHDC1 family.

Its subcellular location is the cytoplasm. In terms of biological role, involved in the maintenance of embryonic stem (ES) cell pluripotency. Dispensable for self-renewal of pluripotent ES cells and establishment of germ cells. Associates with specific target mRNAs. This Mus musculus (Mouse) protein is Developmental pluripotency-associated protein 5B/5C.